The sequence spans 89 residues: Small ribosomal subunit protein bS16c (89 aa).

The protein belongs to the bacterial ribosomal protein bS16 family.

It is found in the plastid. Its subcellular location is the chloroplast. This chain is Small ribosomal subunit protein bS16c, found in Morus indica (Mulberry).